The primary structure comprises 342 residues: Galactose mutarotase (342 aa).

Ser-14 is subject to Phosphoserine. Residues Asn-81–Arg-82, His-107, His-176–Tyr-178, Asp-243, Gln-279, and Glu-307 each bind beta-D-galactose. The Proton donor role is filled by His-176. Residue Glu-307 is the Proton acceptor of the active site.

Belongs to the aldose epimerase family. As to quaternary structure, monomer.

It localises to the cytoplasm. The catalysed reaction is alpha-D-galactose = beta-D-galactose. The enzyme catalyses alpha-D-glucose = beta-D-glucose. It participates in carbohydrate metabolism; hexose metabolism. The protein operates within carbohydrate metabolism; galactose metabolism. In terms of biological role, mutarotase that catalyzes the interconversion of beta-D-galactose and alpha-D-galactose during galactose metabolism. Beta-D-galactose is metabolized in the liver into glucose 1-phosphate, the primary metabolic fuel, by the action of four enzymes that constitute the Leloir pathway: GALM, GALK1 (galactokinase), GALT (galactose-1-phosphate uridylyltransferase) and GALE (UDP-galactose-4'-epimerase). Involved in the maintenance of the equilibrium between the beta- and alpha-anomers of galactose, therefore ensuring a sufficient supply of the alpha-anomer for GALK1. Also active on D-glucose although shows a preference for galactose over glucose. This is Galactose mutarotase from Mus musculus (Mouse).